Consider the following 94-residue polypeptide: MPRAPNDAPSASATPSATPASYEAAMAELETLVASMESGELPLEASLAAYRRGAELVKYCQQVLERVEQQVRVLDGDALKPLGDDSNTNEQGDA.

The interval 1–21 is disordered; it reads MPRAPNDAPSASATPSATPAS.

It belongs to the XseB family. In terms of assembly, heterooligomer composed of large and small subunits.

It localises to the cytoplasm. The catalysed reaction is Exonucleolytic cleavage in either 5'- to 3'- or 3'- to 5'-direction to yield nucleoside 5'-phosphates.. Its function is as follows. Bidirectionally degrades single-stranded DNA into large acid-insoluble oligonucleotides, which are then degraded further into small acid-soluble oligonucleotides. This Ralstonia pickettii (strain 12J) protein is Exodeoxyribonuclease 7 small subunit.